We begin with the raw amino-acid sequence, 237 residues long: Ig heavy chain Mem5 (237 aa).

2 Ig-like domains span residues 1 to 119 and 126 to 218; these read EVKL…LTVS and PSVY…KKIE. A disulfide bond links cysteine 22 and cysteine 98. The d segment stretch occupies residues 101–105; the sequence is VDYGT. The tract at residues 106 to 120 is JH2 segment; that stretch reads NYDYWGQGTTLTVSS. Cysteine 147 and cysteine 202 form a disulfide bridge.

It is found in the secreted. In terms of biological role, anti-influenza H3N2 neuraminidase antibody. The sequence is that of Ig heavy chain Mem5 from Mus musculus (Mouse).